Consider the following 82-residue polypeptide: Small ribosomal subunit protein bS16 (82 aa).

This sequence belongs to the bacterial ribosomal protein bS16 family.

This is Small ribosomal subunit protein bS16 from Pasteurella multocida (strain Pm70).